Here is a 356-residue protein sequence, read N- to C-terminus: 3-dehydroquinate synthase (356 aa).

NAD(+) contacts are provided by residues 106–110, 130–131, Lys-143, and Lys-152; these read GVVGD and TT. Zn(2+) contacts are provided by Glu-185, His-248, and His-265.

Belongs to the sugar phosphate cyclases superfamily. Dehydroquinate synthase family. The cofactor is Co(2+). It depends on Zn(2+) as a cofactor. Requires NAD(+) as cofactor.

Its subcellular location is the cytoplasm. It carries out the reaction 7-phospho-2-dehydro-3-deoxy-D-arabino-heptonate = 3-dehydroquinate + phosphate. It participates in metabolic intermediate biosynthesis; chorismate biosynthesis; chorismate from D-erythrose 4-phosphate and phosphoenolpyruvate: step 2/7. Functionally, catalyzes the conversion of 3-deoxy-D-arabino-heptulosonate 7-phosphate (DAHP) to dehydroquinate (DHQ). This chain is 3-dehydroquinate synthase, found in Thermoanaerobacter pseudethanolicus (strain ATCC 33223 / 39E) (Clostridium thermohydrosulfuricum).